An 882-amino-acid chain; its full sequence is Alanine--tRNA ligase (882 aa).

His-571, His-575, Cys-673, and His-677 together coordinate Zn(2+).

It belongs to the class-II aminoacyl-tRNA synthetase family. Zn(2+) serves as cofactor.

Its subcellular location is the cytoplasm. It carries out the reaction tRNA(Ala) + L-alanine + ATP = L-alanyl-tRNA(Ala) + AMP + diphosphate. Catalyzes the attachment of alanine to tRNA(Ala) in a two-step reaction: alanine is first activated by ATP to form Ala-AMP and then transferred to the acceptor end of tRNA(Ala). Also edits incorrectly charged Ser-tRNA(Ala) and Gly-tRNA(Ala) via its editing domain. The protein is Alanine--tRNA ligase of Desulfotalea psychrophila (strain LSv54 / DSM 12343).